The chain runs to 692 residues: MAREFSLENTRNIGIMAHIDAGKTTTTERILFYTGRIHKIGETHEGASQMDWMEQEQERGITITSAATTAQWKGHRINIIDTPGHVDFTVEVERSLRVLDGAITVLDAQSGVEPQTETVWRQATTYGVPRIVFVNKMDKIGADFLYSVKTLHDRLHANAHPVQLPIGAEDQFSGIIDLVEMCAYHYHDELGKNIERIEIPEDYRDMAEEYRNKLIEAVAELDEELMMKYLEGEEITKEELKAAIRKATISVEFFPVFCGSAFKNKGVQLLLDGVVDYLPSPVDIPPIKGIVPDTEEEVVREADDDAPFAALAFKVMTDPYVGKLTFFRVYSGTLDSGSYVMNSTKRKRERIGRILQMHANHRQEISKVYAGDIAAAVGLKDTTTGDTLCDEKNLVILESMQFPEPVISVAIEPKSKADQDKMGQALQKLQEEDPTFRAHTDPETGQTIISGMGELHLDIIVDRMRREFKVEANVGAPQVAYRETFRKSAQVEGKFIRQSGGRGQYGHVWIEFSPNERGKGFEFENAIVGGVVPKEYVPAVQAGLEEAMQNGVLAGYPVVDIKAKLFDGSYHDVDSSEMAFKIAASLALKNAATKCDPVLLEPIMKVEVVIPEEYLGDIMGDITSRRGRVEGMEARGNAQVVRAMVPLAEMFGYATSLRSNTQGRGTFTMVFDHYEEVPKNIADEIIKKNKGE.

In terms of domain architecture, tr-type G spans 8–282; the sequence is ENTRNIGIMA…GVVDYLPSPV (275 aa). GTP contacts are provided by residues 17–24, 81–85, and 135–138; these read AHIDAGKT, DTPGH, and NKMD.

This sequence belongs to the TRAFAC class translation factor GTPase superfamily. Classic translation factor GTPase family. EF-G/EF-2 subfamily.

Its subcellular location is the cytoplasm. Catalyzes the GTP-dependent ribosomal translocation step during translation elongation. During this step, the ribosome changes from the pre-translocational (PRE) to the post-translocational (POST) state as the newly formed A-site-bound peptidyl-tRNA and P-site-bound deacylated tRNA move to the P and E sites, respectively. Catalyzes the coordinated movement of the two tRNA molecules, the mRNA and conformational changes in the ribosome. This Geobacillus sp. (strain WCH70) protein is Elongation factor G.